A 306-amino-acid polypeptide reads, in one-letter code: Putative syntaxin-3 (306 aa).

Topologically, residues 1 to 279 are cytoplasmic; the sequence is MPRDRLKELQ…QKRARKMKVC (279 aa). Residues 40 to 180 are required for the regulation of the defecation motor program; it reads QDADFEMFLE…QLSDEEIENA (141 aa). In terms of domain architecture, t-SNARE coiled-coil homology spans 204-266; sequence YDEVKSRADE…KQARGNVEEA (63 aa). Residues 280–300 traverse the membrane as a helical; Anchor for type IV membrane protein segment; that stretch reads IIIGSIIAVLILILFIQSAVC. The Extracellular segment spans residues 301 to 306; sequence HFTPIC.

This sequence belongs to the syntaxin family. Expressed in body wall, pharyngeal, vulval and enteric muscles and in some head neurons.

Its subcellular location is the cell membrane. Its function is as follows. Potentially involved in docking of synaptic vesicles at presynaptic active zones. Acts in the intestine to regulate anterior body muscle contractions (aBOC) and the expulsion steps during the defecation motor program (DMP). This chain is Putative syntaxin-3, found in Caenorhabditis elegans.